Reading from the N-terminus, the 202-residue chain is Secreted RxLR effector protein 93 (202 aa).

The N-terminal stretch at 1–16 (MRFYLTKLFAAAGALA) is a signal peptide. Positions 29–58 (TPVSPLSRSSDHHQSDDSTQRRLRTLNGAD) are disordered. Positions 37-48 (SSDHHQSDDSTQ) are enriched in basic and acidic residues. The RxLR-dEER signature appears at 49 to 61 (RRLRTLNGADEER).

The protein belongs to the RxLR effector family.

It is found in the secreted. Its subcellular location is the host nucleus. Functionally, secreted effector that completely suppresses the host cell death induced by cell death-inducing proteins. This chain is Secreted RxLR effector protein 93, found in Plasmopara viticola (Downy mildew of grapevine).